A 1129-amino-acid polypeptide reads, in one-letter code: Kinesin-like protein KIP1 (1129 aa).

Residues 1–49 are disordered; that stretch reads MLEQAEKLMKRNSSGAMSAPQSKPLARSRSSTMPTTTQKRVRSSQQSEG. 2 stretches are compositionally biased toward polar residues: residues 11–21 and 28–48; these read RNSSGAMSAPQ and SRSS…QQSE. In terms of domain architecture, Kinesin motor spans 54 to 417; that stretch reads NIKVYVRCRS…LEYATRAKSI (364 aa). An ATP-binding site is contributed by 139-146; that stretch reads GQTGTGKT. Coiled coils occupy residues 422–513, 681–765, and 919–948; these read QVNQ…ELDV, LEKE…QKIV, and DDQR…TLVN.

This sequence belongs to the TRAFAC class myosin-kinesin ATPase superfamily. Kinesin family. BimC subfamily.

It is found in the cytoplasm. The protein resides in the cytoskeleton. It localises to the spindle. In terms of biological role, required for assembly of the mitotic spindle. Interacts with spindle microtubules to produce an outwardly directed force acting upon the poles. Following spindle assembly, CIN8 and KIP1 apparently act to oppose a force that draws separated poles back together. This force seems to be mediate by KAR3. In Eremothecium gossypii (strain ATCC 10895 / CBS 109.51 / FGSC 9923 / NRRL Y-1056) (Yeast), this protein is Kinesin-like protein KIP1 (KIP1).